The primary structure comprises 905 residues: MDSHNNIDQSVSELLSDPASVQQSYNSQLRGPEFDQQRQIRNQVSPFNKMTDTIDNDNIPLSSDYDKLYQQFSIPSQQQYENNSDNVYKTNNDLAALASPLNMDLDLAPSDQQQQPQQSQQQFLNDFSNLQPHLNNSQEQVQLNGLTSNILSNPQITVNMPGAYHQNYNCDQMEIDDSPPFTIESDLYFEQQTDNNSIVTSNRVHNQPDVESMFNNQLSVPSLQRTELSPQQHETNVTTGRPQESAFGSFDNNSRVSSFANVNNAGTNLFVNGKDLYFDDESHHRTGRLRNGSIDSYYAANVINHQLHLQQQTQAQAQAHQQQQQQSQQQHSPQDLASHTSLPSKSIYNELSPLTTTTSRASSIQSGQPSFFSAQQYFSRNSMDQVPSSLHRPSFDLYNHRPSIDSQHSQQSQQRNARYTSFTSSISNILPFMSEKNTNHNNRSPPTPPTSTSSPQNLLSSNQSRHLIRSIFKTNPTPIVSDAGNSNGNIVNGGSGTIDAENLPDAPYASGTINDSEFLILSSPTKEEPEDELMQPKKVKKPKRSLFTRFKTPVKQEQPDSEMAVSAPVDELKPDETVIDMVGNISSHHSSGTPSITTGAGGNTLEHSISESSFQEPDYAALFENVGKRKNKSYRKPKGKTKEEEQQQQQLPLSSGTAGGTSSNNSTGTVEKTLFFNKTKIKKEPASERSSLLDNASAGNASASSSEASSIQNAIGSDDHNGPPLTSAPTSSTLANASKRILSSKLISKKKSTSKLKEYTAAELEDMCTVSSLETPVATMISKGIEVEVDLASLDLPPDTKIFPTSIINNKNRTRGRKENKEADLSDTSKIYLCNLCQRRFKRHEHLKRHFRSLHTFEKPYNCDICHKKFSRSDNLNQHLKIHKQEDEKDCADAETGVGMDDASG.

Over residues 1–29 the composition is skewed to polar residues; that stretch reads MDSHNNIDQSVSELLSDPASVQQSYNSQL. 8 disordered regions span residues 1–34, 312–340, 383–419, 434–460, 525–544, 584–613, 625–671, and 685–733; these read MDSHNNIDQSVSELLSDPASVQQSYNSQLRGPEF, QTQAQAQAHQQQQQQSQQQHSPQDLASHT, MDQVPSSLHRPSFDLYNHRPSIDSQHSQQSQQRNARY, SEKNTNHNNRSPPTPPTSTSSPQNLLS, TKEEPEDELMQPKKVKKPKR, NISSHHSSGTPSITTGAGGNTLEHSISESS, NVGK…GTVE, and PASE…TSST. A compositionally biased stretch (low complexity) spans 312–334; it reads QTQAQAQAHQQQQQQSQQQHSPQ. Low complexity predominate over residues 439–460; the sequence is NHNNRSPPTPPTSTSSPQNLLS. The segment covering 584 to 598 has biased composition (polar residues); the sequence is NISSHHSSGTPSITT. Basic residues predominate over residues 628–639; sequence KRKNKSYRKPKG. 2 stretches are compositionally biased toward low complexity: residues 647-669 and 690-710; these read QQQQLPLSSGTAGGTSSNNSTGT and SSLLDNASAGNASASSSEASS. 2 C2H2-type zinc fingers span residues 832-855 and 861-883; these read YLCNLCQRRFKRHEHLKRHFRSLH and YNCDICHKKFSRSDNLNQHLKIH. A disordered region spans residues 885-905; that stretch reads QEDEKDCADAETGVGMDDASG.

The protein localises to the nucleus. Its function is as follows. Transcription factor that activates stress response genes via SLE (STRE-like) elements. Required for adaptation to weak acid stress such as acetic acid stress, but seems not involved in the response to heat, osmotic, ethanol, nutrient, oxidative, or heavy-metal stress. Activates a subset of the genes that are repressed by NRG1. The sequence is that of Transcriptional regulator MNL1 (MNL1) from Candida albicans (strain SC5314 / ATCC MYA-2876) (Yeast).